The sequence spans 156 residues: MPRKGPIPRREVLPDPVYNSRLAARFVNRMMVDGKKGAAEKIFYKSLEVLQEKTGEDAIKAFEKAVDNVKPFVEVKSRRVGGATYQVPVEVRSDRQVSLAIRWLITYARARGEKGMVGRLSGELLDAFNNRGGAVKKKDDTHRMAEANKAFAHFRW.

Belongs to the universal ribosomal protein uS7 family. In terms of assembly, part of the 30S ribosomal subunit. Contacts proteins S9 and S11.

One of the primary rRNA binding proteins, it binds directly to 16S rRNA where it nucleates assembly of the head domain of the 30S subunit. Is located at the subunit interface close to the decoding center, probably blocks exit of the E-site tRNA. This Oleidesulfovibrio alaskensis (strain ATCC BAA-1058 / DSM 17464 / G20) (Desulfovibrio alaskensis) protein is Small ribosomal subunit protein uS7.